The primary structure comprises 895 residues: Endochitinase 2 (895 aa).

Residues 1–22 form the signal peptide; sequence MGLTNILAAFIAVSSLFIQSLA. The GH18 domain occupies 29-340; sequence SNLAVYWGQG…DIMKEVLLRC (312 aa). Asparagine 90 is a glycosylation site (N-linked (GlcNAc...) asparagine). Glutamate 175 (proton donor) is an active-site residue. A disordered region spans residues 343-712; that stretch reads DPPTSTVTST…APSSSTTEDR (370 aa). The segment covering 346–425 has biased composition (low complexity); that stretch reads TSTVTSTISA…ISTRSASTET (80 aa). The span at 426–478 shows a compositional bias: polar residues; sequence VTTRSQEPPSTTISTRPASTETVTTRSQEPPSSTISTRSASTETVTTRSQEPP. A compositionally biased stretch (low complexity) spans 479 to 505; it reads SSTISTRSASTETSTSSQDSPSTTIST. Positions 506–543 are enriched in polar residues; sequence KSAPTGTVTTRSQDLPSTTISTRSPETETETVTTKSQD. The segment covering 544–555 has biased composition (low complexity); the sequence is SPSITLSTRSSS. Positions 556–577 are enriched in polar residues; sequence AETVSTRSQHSSSTTISTKSAP. Over residues 578 to 589 the composition is skewed to low complexity; that stretch reads TETGTTSEHSTS. The segment covering 590–657 has biased composition (polar residues); it reads MPVSTRSAST…ISTELPSQTH (68 aa). Composition is skewed to low complexity over residues 658-692 and 699-712; these read STTDSTPVSSSPTIPSGSTTIIPGTASDPVSAPTT and TLTLAPSSSTTEDR. A lipid anchor (GPI-anchor amidated glycine) is attached at glycine 866. Residues 867–895 constitute a propeptide, removed in mature form; the sequence is GAMTVRSMDVVAKALITAGAAVLGLFLGL.

This sequence belongs to the glycosyl hydrolase 18 family. Chitinase class III subfamily.

It localises to the cell membrane. The catalysed reaction is Random endo-hydrolysis of N-acetyl-beta-D-glucosaminide (1-&gt;4)-beta-linkages in chitin and chitodextrins.. In terms of biological role, may be associated with endosporulation. The sequence is that of Endochitinase 2 (CTS2) from Coccidioides immitis (strain RS) (Valley fever fungus).